Consider the following 228-residue polypeptide: Protein K8.1 (228 aa).

A signal peptide spans 1-26 (MSSTQIRTEIPVALLILCLCLVACHA). N-linked (GlcNAc...) asparagine; by host glycans are attached at residues N55, N60, N70, and N85. The disordered stretch occupies residues 77–113 (GSPSSEYPNVSVSVEDTSASGSGEDAIDESGSGEEER). The span at 78-97 (SPSSEYPNVSVSVEDTSASG) shows a compositional bias: polar residues. Residues 197–217 (LYILWAVGLLLGLVLILYLCV) form a helical membrane-spanning segment.

It is found in the host membrane. This chain is Protein K8.1 (K8.1), found in Human herpesvirus 8 type P (isolate GK18) (HHV-8).